The sequence spans 501 residues: MPQTPPRSGGYRSGKQSYVDESLFGGSKRTGAAQVETLDSLKLTAPTRTISPKDRDVVTLTKGDLTRMLKASPIMTAEDVAAAKREAEAKREQLQAVSKARKEKMLKLEEEAKKQAPPTETEILQRQLNDATRSRATHMMLEQKDPVKHMNQMMLYSKCVTIRDAQIEEKKQMLAEEEEEQRRLDLMMEIERVKALEQYEARERQRVEERRKGAAVLSEQIKERERERIRQEELRDQERLQMLREIERLKEEEMQAQIEKKIQAKQLMEEVAAANSEQIKRKEGMKVREKEEDLRIADYILQKEMREQSLAAEKERIAKEKEMETARLRAMQERAADKQSELDELRARRYQEAKEREWRQKERAYAERQASMQQELANARTAQQASKLKQKAEMARLEHDEFMRVLDVNRAKEYDELQQTVNAMTLNSKYKEELLAQIQANEERRKRERSHYLEEGARLREAAEKERQLLLQIKDRKLGELESAGVPGKYRAELEKMKIRS.

Positions 75 to 114 form a coiled coil; it reads MTAEDVAAAKREAEAKREQLQAVSKARKEKMLKLEEEAKK.

This sequence belongs to the CFAP45 family.

It is found in the cell projection. The protein resides in the cilium. The protein localises to the flagellum. This chain is Cilia- and flagella-associated protein 45, found in Chlamydomonas reinhardtii (Chlamydomonas smithii).